The sequence spans 243 residues: Probable intron-encoded endonuclease aI3 (243 aa).

Belongs to the LAGLIDADG endonuclease family.

It localises to the mitochondrion. Its function is as follows. Mitochondrial DNA endonuclease involved in intron homing. The chain is Probable intron-encoded endonuclease aI3 (aI3) from Dictyostelium citrinum (Slime mold).